Here is a 448-residue protein sequence, read N- to C-terminus: Cytoplasmic tRNA 2-thiolation protein 2 (448 aa).

Belongs to the CTU2/NCS2 family.

Its subcellular location is the cytoplasm. The protein operates within tRNA modification; 5-methoxycarbonylmethyl-2-thiouridine-tRNA biosynthesis. In terms of biological role, plays a central role in 2-thiolation of mcm(5)S(2)U at tRNA wobble positions of tRNA(Lys), tRNA(Glu) and tRNA(Gln). May act by forming a heterodimer with NCS6 that ligates sulfur from thiocarboxylated URM1 onto the uridine of tRNAs at wobble position. Prior mcm(5) tRNA modification by the elongator complex is required for 2-thiolation. May also be involved in protein urmylation. This is Cytoplasmic tRNA 2-thiolation protein 2 from Lodderomyces elongisporus (strain ATCC 11503 / CBS 2605 / JCM 1781 / NBRC 1676 / NRRL YB-4239) (Yeast).